Reading from the N-terminus, the 467-residue chain is UDP-glycosyltransferase 71D2 (467 aa).

UDP-alpha-D-glucose contacts are provided by residues Ser-283, 339–341 (SPQ), 356–364 (HCGWNSIVE), and 378–381 (YAEQ).

It belongs to the UDP-glycosyltransferase family.

The polypeptide is UDP-glycosyltransferase 71D2 (UGT71D2) (Arabidopsis thaliana (Mouse-ear cress)).